Here is a 211-residue protein sequence, read N- to C-terminus: Ethylene-responsive transcription factor LEP (211 aa).

Disordered regions lie at residues 1 to 21 (MNTT…TRFL) and 74 to 110 (NFVY…NDPV). The AP2/ERF DNA-binding region spans 19–76 (RFLGVRRRPWGRYAAEIRDPTTKERHWLGTFDTAEEAALAYDRAARSMRGTRARTNFV). Over residues 81–92 (PPSSSVTSIVSP) the composition is skewed to low complexity. The segment covering 93-107 (DDPPPPPPPPAPPSN) has biased composition (pro residues).

This sequence belongs to the AP2/ERF transcription factor family. ERF subfamily. In terms of tissue distribution, expressed in germinating seeds. Present in young shoots, at low levels, especially in leaf primordia and developing leaf blades. Also detected in vascular tissue, mostly in xylem, of young leaves, petioles and hypocotyls.

It localises to the nucleus. Functionally, cell division-promoting factor involved in leaf blade differentiation, inflorescence branching, as well as in carpel and silique shape. Promotes the number of xylem cells. Positively regulates the gibberellin signaling pathway leading to germination, hypocotyl elongation, and leaf expansion. Probably acts as a transcriptional activator. Binds to the GCC-box pathogenesis-related promoter element. May be involved in the regulation of gene expression by stress factors and by components of stress signal transduction pathways. This is Ethylene-responsive transcription factor LEP (LEP) from Arabidopsis thaliana (Mouse-ear cress).